A 191-amino-acid chain; its full sequence is Elongation factor P (191 aa).

Belongs to the elongation factor P family.

It localises to the cytoplasm. Its pathway is protein biosynthesis; polypeptide chain elongation. Involved in peptide bond synthesis. Stimulates efficient translation and peptide-bond synthesis on native or reconstituted 70S ribosomes in vitro. Probably functions indirectly by altering the affinity of the ribosome for aminoacyl-tRNA, thus increasing their reactivity as acceptors for peptidyl transferase. This is Elongation factor P from Janthinobacterium sp. (strain Marseille) (Minibacterium massiliensis).